The chain runs to 261 residues: Indole-3-glycerol phosphate synthase (261 aa).

This sequence belongs to the TrpC family.

The catalysed reaction is 1-(2-carboxyphenylamino)-1-deoxy-D-ribulose 5-phosphate + H(+) = (1S,2R)-1-C-(indol-3-yl)glycerol 3-phosphate + CO2 + H2O. The protein operates within amino-acid biosynthesis; L-tryptophan biosynthesis; L-tryptophan from chorismate: step 4/5. This Paraburkholderia phymatum (strain DSM 17167 / CIP 108236 / LMG 21445 / STM815) (Burkholderia phymatum) protein is Indole-3-glycerol phosphate synthase.